An 881-amino-acid chain; its full sequence is Probable alpha/beta-glucosidase agdC (881 aa).

Positions 1–14 (MLRSLLLLAPLVGA) are cleaved as a signal peptide. N-linked (GlcNAc...) asparagine glycans are attached at residues Asn-171, Asn-293, and Asn-373. The Nucleophile role is filled by Asp-422. Glu-425 is an active-site residue. A disordered region spans residues 440-485 (YSRDNDLPPAAPPVRPSNPRPLPGFPGDFQPSSSSKRSTKGSKVGL). The span at 448-463 (PAAPPVRPSNPRPLPG) shows a compositional bias: pro residues. N-linked (GlcNAc...) asparagine glycosylation is present at Asn-506. The active-site Proton donor is Asp-571. Residues Asn-572, Asn-608, and Asn-742 are each glycosylated (N-linked (GlcNAc...) asparagine).

This sequence belongs to the glycosyl hydrolase 31 family.

Its subcellular location is the secreted. It carries out the reaction Hydrolysis of terminal, non-reducing (1-&gt;4)-linked alpha-D-glucose residues with release of alpha-D-glucose.. The enzyme catalyses Hydrolysis of terminal, non-reducing beta-D-glucosyl residues with release of beta-D-glucose.. In terms of biological role, glucosidase involved in the degradation of cellulosic biomass. Has both alpha- and beta-glucosidase activity. This chain is Probable alpha/beta-glucosidase agdC (agdC), found in Neosartorya fischeri (strain ATCC 1020 / DSM 3700 / CBS 544.65 / FGSC A1164 / JCM 1740 / NRRL 181 / WB 181) (Aspergillus fischerianus).